A 60-amino-acid polypeptide reads, in one-letter code: Large ribosomal subunit protein bL32 (60 aa).

It belongs to the bacterial ribosomal protein bL32 family.

In Borreliella burgdorferi (strain ATCC 35210 / DSM 4680 / CIP 102532 / B31) (Borrelia burgdorferi), this protein is Large ribosomal subunit protein bL32 (rpmF).